A 588-amino-acid chain; its full sequence is Aspartate--tRNA ligase (588 aa).

E174 serves as a coordination point for L-aspartate. The aspartate stretch occupies residues 198-201; it reads QLFK. An L-aspartate-binding site is contributed by R220. ATP is bound by residues 220-222 and Q229; that span reads RDE. Position 448 (H448) interacts with L-aspartate. An ATP-binding site is contributed by E482. R489 contributes to the L-aspartate binding site. 534-537 serves as a coordination point for ATP; that stretch reads GIDR.

The protein belongs to the class-II aminoacyl-tRNA synthetase family. Type 1 subfamily. In terms of assembly, homodimer.

The protein localises to the cytoplasm. The catalysed reaction is tRNA(Asp) + L-aspartate + ATP = L-aspartyl-tRNA(Asp) + AMP + diphosphate. Catalyzes the attachment of L-aspartate to tRNA(Asp) in a two-step reaction: L-aspartate is first activated by ATP to form Asp-AMP and then transferred to the acceptor end of tRNA(Asp). This is Aspartate--tRNA ligase from Xanthomonas euvesicatoria pv. vesicatoria (strain 85-10) (Xanthomonas campestris pv. vesicatoria).